A 537-amino-acid polypeptide reads, in one-letter code: Eukaryotic translation initiation factor 3 subunit L (537 aa).

A PCI domain is found at 301–513 (TFSSILLYIQ…IHIADTKVSH (213 aa)).

This sequence belongs to the eIF-3 subunit L family. Component of the eukaryotic translation initiation factor 3 (eIF-3) complex.

It is found in the cytoplasm. Its function is as follows. Component of the eukaryotic translation initiation factor 3 (eIF-3) complex, which is involved in protein synthesis of a specialized repertoire of mRNAs and, together with other initiation factors, stimulates binding of mRNA and methionyl-tRNAi to the 40S ribosome. The eIF-3 complex specifically targets and initiates translation of a subset of mRNAs involved in cell proliferation. This Aedes aegypti (Yellowfever mosquito) protein is Eukaryotic translation initiation factor 3 subunit L.